We begin with the raw amino-acid sequence, 253 residues long: Sulfate transporter CysZ (253 aa).

A run of 4 helical transmembrane segments spans residues 31–51 (FVIL…WWLF), 75–95 (LLWP…FSTI), 151–171 (IVLL…PVLW), and 222–242 (IPLL…AMWV).

This sequence belongs to the CysZ family.

Its subcellular location is the cell inner membrane. Functionally, high affinity, high specificity proton-dependent sulfate transporter, which mediates sulfate uptake. Provides the sulfur source for the cysteine synthesis pathway. The polypeptide is Sulfate transporter CysZ (Escherichia coli O8 (strain IAI1)).